We begin with the raw amino-acid sequence, 299 residues long: Oxygen-dependent coproporphyrinogen-III oxidase (299 aa).

Ser92 contributes to the substrate binding site. Positions 96 and 106 each coordinate a divalent metal cation. Residue His106 is the Proton donor of the active site. 108–110 is a substrate binding site; sequence NVR. A divalent metal cation-binding residues include His145 and His175. Residues 240–275 form an important for dimerization region; sequence YVEFNLVWDRGTLFGLQTGGRTESILMSMPPLVRWE. Residue 258-260 participates in substrate binding; it reads GGR.

Belongs to the aerobic coproporphyrinogen-III oxidase family. Homodimer. A divalent metal cation is required as a cofactor.

It is found in the cytoplasm. It carries out the reaction coproporphyrinogen III + O2 + 2 H(+) = protoporphyrinogen IX + 2 CO2 + 2 H2O. It participates in porphyrin-containing compound metabolism; protoporphyrin-IX biosynthesis; protoporphyrinogen-IX from coproporphyrinogen-III (O2 route): step 1/1. Involved in the heme biosynthesis. Catalyzes the aerobic oxidative decarboxylation of propionate groups of rings A and B of coproporphyrinogen-III to yield the vinyl groups in protoporphyrinogen-IX. The chain is Oxygen-dependent coproporphyrinogen-III oxidase from Salmonella enteritidis PT4 (strain P125109).